The chain runs to 214 residues: MATARKPRGGAGGAAQPALDFDAPGEIVCGVDEAGRGPLAGPVVAAAVVLDPARPIVGLDDSKALSAKKRERLFDEIVAHALAYCVASASVEEIDTLNILHATMLAMKRAVEGLAVRPTLAKIDGNRCPMLAIRSEAIVGGDALVPSISAASILAKVTRDRMLVELHQQFPMYGFDAHAGYGTPQHLAALREHGPCEHHRRSFAPVREAFDLIR.

The 189-residue stretch at 26 to 214 (EIVCGVDEAG…PVREAFDLIR (189 aa)) folds into the RNase H type-2 domain. Asp-32, Glu-33, and Asp-124 together coordinate a divalent metal cation.

This sequence belongs to the RNase HII family. Mn(2+) serves as cofactor. The cofactor is Mg(2+).

It is found in the cytoplasm. It carries out the reaction Endonucleolytic cleavage to 5'-phosphomonoester.. Its function is as follows. Endonuclease that specifically degrades the RNA of RNA-DNA hybrids. This is Ribonuclease HII from Burkholderia thailandensis (strain ATCC 700388 / DSM 13276 / CCUG 48851 / CIP 106301 / E264).